Reading from the N-terminus, the 353-residue chain is 2-oxoglutarate-Fe(II) type oxidoreductase ppzD (353 aa).

The 112-residue stretch at 181 to 292 folds into the Fe2OG dioxygenase domain; the sequence is NTSELRLNHY…RYSVAYFGKP (112 aa). Positions 208, 210, and 268 each coordinate Fe cation. Residue R283 coordinates 2-oxoglutarate.

It belongs to the iron/ascorbate-dependent oxidoreductase family. The cofactor is Fe(2+).

The enzyme catalyses L-proline + 2-oxoglutarate + O2 = trans-4-hydroxy-L-proline + succinate + CO2. It carries out the reaction L-proline + 2-oxoglutarate + O2 = trans-3-hydroxy-L-proline + succinate + CO2. It catalyses the reaction D-proline + 2-oxoglutarate + O2 = cis-4-hydroxy-D-proline + succinate + CO2. It functions in the pathway secondary metabolite biosynthesis. In terms of biological role, 2-oxoglutarate-Fe(II) type oxidoreductase; part of the gene cluster that mediates the biosynthesis of pyrrolopyrazines, secondary metabolites showing insecticidal activity. Within the pathway, ppzD converts L-proline into trans-4-hydroxy-L-proline as a major product, yielding a key precursor for peramine biosynthesis. PpzD is also able to convert L-proline into trans-3-hydroxy-L-proline. The single multifunctional NRPS ppzA is sufficient to produce peramine via condensation of 1-pyrroline-5-carboxylate and arginine, N-methylation of the alpha-amino group of arginine and reduction of the thioester and the cyclization to form an iminium ion resulting in release from the peptide synthetase. Deprotonation of this intermediate and oxidation of the pyrroline ring would give rise to peramine. In Epichloe species that produce only peramine, the peramine synthetase gene is not localized in a gene cluster, in contrast to Metarhizium species that contain additional pyrrolopyrazine biosynthesis genes. The 2-oxoglutarate-Fe(II) type oxidoreductase ppzC hydroxylates peramine to yield the newly identified compound 8-hydroxyperamine whereas ppzD converts L-proline into trans-4-hydroxy-L-proline, a precursor of peramine biosynthesis. In Metarhizium rileyi (strain RCEF 4871) (Nomuraea rileyi), this protein is 2-oxoglutarate-Fe(II) type oxidoreductase ppzD.